The chain runs to 126 residues: Phosphoribosyl-ATP pyrophosphatase (126 aa).

This sequence belongs to the PRA-PH family.

Its subcellular location is the cytoplasm. It catalyses the reaction 1-(5-phospho-beta-D-ribosyl)-ATP + H2O = 1-(5-phospho-beta-D-ribosyl)-5'-AMP + diphosphate + H(+). Its pathway is amino-acid biosynthesis; L-histidine biosynthesis; L-histidine from 5-phospho-alpha-D-ribose 1-diphosphate: step 2/9. This Variovorax paradoxus (strain S110) protein is Phosphoribosyl-ATP pyrophosphatase.